The chain runs to 307 residues: Methionyl-tRNA formyltransferase (307 aa).

108 to 111 lines the (6S)-5,6,7,8-tetrahydrofolate pocket; the sequence is SLLP.

The protein belongs to the Fmt family.

The catalysed reaction is L-methionyl-tRNA(fMet) + (6R)-10-formyltetrahydrofolate = N-formyl-L-methionyl-tRNA(fMet) + (6S)-5,6,7,8-tetrahydrofolate + H(+). Attaches a formyl group to the free amino group of methionyl-tRNA(fMet). The formyl group appears to play a dual role in the initiator identity of N-formylmethionyl-tRNA by promoting its recognition by IF2 and preventing the misappropriation of this tRNA by the elongation apparatus. In Xylella fastidiosa (strain M12), this protein is Methionyl-tRNA formyltransferase.